Here is a 1135-residue protein sequence, read N- to C-terminus: Large proline-rich protein bag6-A (1135 aa).

Residues 7 to 82 (MEVTVKTLDS…HLVERAPPQT (76 aa)) form the Ubiquitin-like domain. Disordered stretches follow at residues 76-114 (ERAP…RNGN), 194-238 (EQAA…SPSE), 350-407 (TGNG…PHPR), 498-522 (SFQF…VPGA), 552-612 (QGGS…QHLS), 661-698 (PVST…ESLP), 1075-1099 (KATG…EAQG), and 1116-1135 (NESY…RGDP). Over residues 79–100 (PPQTQPSTGGPSTSSSTSPTSS) the composition is skewed to low complexity. Polar residues predominate over residues 212 to 227 (RETLPQTTQNTDGQSN). A compositionally biased stretch (low complexity) spans 228 to 237 (TTPTSHPSPS). Positions 367 to 387 (QPPSTNTSEPQRPNTENQPPS) are enriched in polar residues. Composition is skewed to low complexity over residues 555-600 (SSTS…SVPS) and 663-672 (STAPTQSASQ). Residues 673–692 (APPPSSPPPPPAHSSPPPAA) show a composition bias toward pro residues. A compositionally biased stretch (basic and acidic residues) spans 1087-1099 (CVRRELDNSEAQG). The segment covering 1116-1129 (NESYSAQRFPNTQR) has biased composition (polar residues).

As to quaternary structure, component of the bag6/bat3 complex.

It is found in the cytoplasm. The protein localises to the cytosol. It localises to the nucleus. The protein resides in the secreted. Its subcellular location is the extracellular exosome. In terms of biological role, ATP-independent molecular chaperone preventing the aggregation of misfolded and hydrophobic patches-containing proteins. Functions as part of a cytosolic protein quality control complex, the bag6/bat3 complex, which maintains these client proteins in a soluble state and participates in their proper delivery to the endoplasmic reticulum or alternatively can promote their sorting to the proteasome where they undergo degradation. The bag6/bat3 complex is involved in the post-translational delivery of tail-anchored/type II transmembrane proteins to the endoplasmic reticulum membrane. Similarly, the bag6/bat3 complex also functions as a sorting platform for proteins of the secretory pathway that are mislocalized to the cytosol either delivering them to the proteasome for degradation or to the endoplasmic reticulum. The bag6/bat3 complex also plays a role in the endoplasmic reticulum-associated degradation (ERAD), a quality control mechanism that eliminates unwanted proteins of the endoplasmic reticulum through their retrotranslocation to the cytosol and their targeting to the proteasome. It maintains these retrotranslocated proteins in an unfolded yet soluble state condition in the cytosol to ensure their proper delivery to the proteasome. Also required for selective ubiquitin-mediated degradation of defective nascent chain polypeptides by the proteasome. Also involved in endoplasmic reticulum stress-induced pre-emptive quality control, a mechanism that selectively attenuates the translocation of newly synthesized proteins into the endoplasmic reticulum and reroutes them to the cytosol for proteasomal degradation. May ensure the proper degradation of these proteins and thereby protects the endoplasmic reticulum from protein overload upon stress. By stabilizing a large spectrum of proteins, may indirectly affect different biological processes including apoptosis. By controlling the steady-state expression of the IGF1R receptor, indirectly regulates the insulin-like growth factor receptor signaling pathway. When nuclear, may also act as a component of some chromatin regulator complex. The sequence is that of Large proline-rich protein bag6-A from Xenopus laevis (African clawed frog).